The following is a 363-amino-acid chain: Strychnine O-methyltransferase (363 aa).

5 residues coordinate S-adenosyl-L-methionine: Gly204, Asp227, Asp249, Met250, and Lys263. His267 functions as the Proton acceptor in the catalytic mechanism.

It belongs to the class I-like SAM-binding methyltransferase superfamily. Cation-independent O-methyltransferase family.

The catalysed reaction is 10-hydroxystrychnine + S-adenosyl-L-methionine = beta-colubrine + S-adenosyl-L-homocysteine + H(+). It carries out the reaction 11-demethylbrucine + S-adenosyl-L-methionine = brucine + S-adenosyl-L-homocysteine + H(+). The protein operates within alkaloid biosynthesis. In terms of biological role, O-methyltransferase involved in the biosynthesis of curare monoterpene indole alkaloids (MIAs), natural products such as strychnine, a neurotoxic compound used as a pesticide to control rodents, and its pharmacologically active derivatives, including brucine, used to regulate blood pressure. Curare alkaloids act as animal glycine receptor antagonists. Catalyzes the conversion of 10-OH strychnine to beta-colubrine, and of 11-deMe brucine to brucine. The polypeptide is Strychnine O-methyltransferase (Strychnos nux-vomica (Poison nut)).